We begin with the raw amino-acid sequence, 503 residues long: Cytochrome P450 11B2, mitochondrial (503 aa).

The N-terminal 24 residues, 1 to 24, are a transit peptide targeting the mitochondrion; it reads MALRAKAEVCVAAPWLSLQRARAL. F381 is a binding site for 21-hydroxyprogesterone. Residue C450 coordinates heme.

It belongs to the cytochrome P450 family. Heme is required as a cofactor. Expressed sporadically in the zona glomerulosa (zG) of the adrenal cortex (conventional zonation), as well as in aldosterone-producing cell clusters (APCCs) composed of morphological zG cells in contact with the capsule (variegated zonation).

Its subcellular location is the mitochondrion inner membrane. The catalysed reaction is a steroid + 2 reduced [adrenodoxin] + O2 + 2 H(+) = an 11beta-hydroxysteroid + 2 oxidized [adrenodoxin] + H2O. It carries out the reaction 21-hydroxyprogesterone + 2 reduced [adrenodoxin] + O2 + 2 H(+) = corticosterone + 2 oxidized [adrenodoxin] + H2O. It catalyses the reaction corticosterone + 2 reduced [adrenodoxin] + O2 + 2 H(+) = 18-hydroxycorticosterone + 2 oxidized [adrenodoxin] + H2O. The enzyme catalyses 18-hydroxycorticosterone + 2 reduced [adrenodoxin] + O2 + 2 H(+) = aldosterone + 2 oxidized [adrenodoxin] + 2 H2O. The catalysed reaction is 11-deoxycortisol + 2 reduced [adrenodoxin] + O2 + 2 H(+) = cortisol + 2 oxidized [adrenodoxin] + H2O. It carries out the reaction 21-hydroxyprogesterone + 2 reduced [adrenodoxin] + O2 + 2 H(+) = 18-hydroxy-11-deoxycorticosterone + 2 oxidized [adrenodoxin] + H2O. It catalyses the reaction cortisol + 2 reduced [adrenodoxin] + O2 + 2 H(+) = 18-hydroxycortisol + 2 oxidized [adrenodoxin] + H2O. The enzyme catalyses 18-hydroxycortisol + 2 reduced [adrenodoxin] + O2 + 2 H(+) = 18-oxocortisol + 2 oxidized [adrenodoxin] + 2 H2O. The protein operates within steroid biosynthesis. In terms of biological role, a cytochrome P450 monooxygenase that catalyzes the biosynthesis of aldosterone, the main mineralocorticoid in the human body responsible for salt and water homeostasis, thus involved in blood pressure regulation, arterial hypertension, and the development of heart failure. Catalyzes three sequential oxidative reactions of 11-deoxycorticosterone (21-hydroxyprogesterone), namely 11-beta hydroxylation, followed by two successive oxidations at C18 yielding 18-hydroxy and then 18-oxo intermediates (that would not leave the enzyme active site during the consecutive hydroxylation reactions), ending with the formation of aldosterone. Can also produce 18-hydroxycortisol and 18-oxocortisol, derived from successive oxidations of cortisol at C18, normally found at very low levels, but significantly increased in primary aldosteronism, the most common form of secondary hypertension. Mechanistically, uses molecular oxygen inserting one oxygen atom into a substrate and reducing the second into a water molecule. Two electrons are provided by NADPH via a two-protein mitochondrial transfer system comprising flavoprotein FDXR (adrenodoxin/ferredoxin reductase) and nonheme iron-sulfur protein FDX1 or FDX2 (adrenodoxin/ferredoxin). Could also be involved in the androgen metabolic pathway. The chain is Cytochrome P450 11B2, mitochondrial from Homo sapiens (Human).